The sequence spans 72 residues: UPF0270 protein YheU (72 aa).

It belongs to the UPF0270 family.

The protein is UPF0270 protein YheU of Escherichia coli (strain UTI89 / UPEC).